The following is a 407-amino-acid chain: Phosphopentomutase (407 aa).

Aspartate 10, aspartate 306, histidine 311, aspartate 347, histidine 348, and histidine 359 together coordinate Mn(2+).

This sequence belongs to the phosphopentomutase family. The cofactor is Mn(2+).

The protein resides in the cytoplasm. It carries out the reaction 2-deoxy-alpha-D-ribose 1-phosphate = 2-deoxy-D-ribose 5-phosphate. The enzyme catalyses alpha-D-ribose 1-phosphate = D-ribose 5-phosphate. It participates in carbohydrate degradation; 2-deoxy-D-ribose 1-phosphate degradation; D-glyceraldehyde 3-phosphate and acetaldehyde from 2-deoxy-alpha-D-ribose 1-phosphate: step 1/2. In terms of biological role, isomerase that catalyzes the conversion of deoxy-ribose 1-phosphate (dRib-1-P) and ribose 1-phosphate (Rib-1-P) to deoxy-ribose 5-phosphate (dRib-5-P) and ribose 5-phosphate (Rib-5-P), respectively. The chain is Phosphopentomutase from Serratia proteamaculans (strain 568).